The sequence spans 396 residues: Elongation factor Tu (396 aa).

The tr-type G domain occupies 11–205 (KPHVNIGTIG…VIDDYIPTPK (195 aa)). The segment at 20-27 (GHVDHGKT) is G1. Residue 20–27 (GHVDHGKT) coordinates GTP. T27 is a Mg(2+) binding site. The interval 61 to 65 (GITIN) is G2. Residues 82–85 (DAPG) form a G3 region. Residues 82–86 (DAPGH) and 137–140 (NKTD) each bind GTP. Residues 137–140 (NKTD) are G4. The tract at residues 175-177 (SAL) is G5.

It belongs to the TRAFAC class translation factor GTPase superfamily. Classic translation factor GTPase family. EF-Tu/EF-1A subfamily. As to quaternary structure, monomer.

The protein localises to the cytoplasm. The catalysed reaction is GTP + H2O = GDP + phosphate + H(+). In terms of biological role, GTP hydrolase that promotes the GTP-dependent binding of aminoacyl-tRNA to the A-site of ribosomes during protein biosynthesis. In Limosilactobacillus reuteri (strain DSM 20016) (Lactobacillus reuteri), this protein is Elongation factor Tu.